A 251-amino-acid chain; its full sequence is UPF0246 protein DSY0297 (251 aa).

The protein belongs to the UPF0246 family.

The sequence is that of UPF0246 protein DSY0297 from Desulfitobacterium hafniense (strain Y51).